Reading from the N-terminus, the 328-residue chain is uncharacterized protein (328 aa).

This is an uncharacterized protein from Schizosaccharomyces pombe (strain 972 / ATCC 24843) (Fission yeast).